Here is a 598-residue protein sequence, read N- to C-terminus: Dihydroxy-acid dehydratase astD, mitochondrial (598 aa).

Residues 1-111 (MFASRIRSRA…HRAGLVPMRF (111 aa)) constitute a mitochondrion transit peptide. A disordered region spans residues 23-50 (RLPASTTGRRYKSDETLNRVSSKITQPK). Residues 40 to 50 (NRVSSKITQPK) are compositionally biased toward polar residues. Cys86 provides a ligand contact to [2Fe-2S] cluster. Asp118 lines the Mg(2+) pocket. Residue Cys159 coordinates [2Fe-2S] cluster. A Mg(2+)-binding site is contributed by Asp160. Cys232 is a [2Fe-2S] cluster binding site. Glu485 provides a ligand contact to Mg(2+). Ser511 (proton acceptor) is an active-site residue.

Belongs to the IlvD/Edd family. [2Fe-2S] cluster is required as a cofactor. The cofactor is Mg(2+).

The protein resides in the mitochondrion. The catalysed reaction is (2R)-2,3-dihydroxy-3-methylbutanoate = 3-methyl-2-oxobutanoate + H2O. The enzyme catalyses (2R,3R)-2,3-dihydroxy-3-methylpentanoate = (S)-3-methyl-2-oxopentanoate + H2O. It participates in amino-acid biosynthesis; L-isoleucine biosynthesis; L-isoleucine from 2-oxobutanoate: step 3/4. The protein operates within amino-acid biosynthesis; L-valine biosynthesis; L-valine from pyruvate: step 3/4. DHAD activity is not inhibited by the dihydroxyacid dehydratase inhibitor aspterric acid (AA). Functionally, dihydroxyacid dehydratase; part of the gene cluster that mediates the biosynthesis of the sesquiterpenoid aspterric acid (AA), an inhibitor of dihydroxy-acid dehydratase (DHAD) effective as an herbicide. Performs the third step in the common pathway leading to biosynthesis of branched-chain amino acids. Catalyzes the dehydration of (2R,3R)-2,3-dihydroxy-3-methylpentanoate (2,3-dihydroxy-3-methylvalerate) into 2-oxo-3-methylpentanoate (2-oxo-3-methylvalerate) and of (2R)-2,3-dihydroxy-3-methylbutanoate (2,3-dihydroxyisovalerate) into 2-oxo-3-methylbutanoate (2-oxoisovalerate), the penultimate precursor to L-isoleucine and L-valine, respectively. AstD confers self-resistance in the presence of the dihydroxyacid dehydratase inhibitor aspterric acid (AA) produced by the ast cluster. This Aspergillus terreus (strain NIH 2624 / FGSC A1156) protein is Dihydroxy-acid dehydratase astD, mitochondrial.